A 126-amino-acid chain; its full sequence is MEFEFIKNTLLGEYAVRCNMEHQIVGRWLQEEIGQDLAKLKHVLTLIDKAEQSPAQEFLWTGREISLLVQGDEITVQENALAYESEHELETDFALYDSESIAACGREDFVALLTQWQSFIQNQGRF.

It belongs to the UPF0231 family.

This chain is UPF0231 protein VC0395_A0134/VC395_0622, found in Vibrio cholerae serotype O1 (strain ATCC 39541 / Classical Ogawa 395 / O395).